A 187-amino-acid polypeptide reads, in one-letter code: Putative carbonic anhydrase YtiB (187 aa).

4 residues coordinate Zn(2+): C38, D40, H96, and C99.

Belongs to the beta-class carbonic anhydrase family. The cofactor is Zn(2+).

The enzyme catalyses hydrogencarbonate + H(+) = CO2 + H2O. Functionally, reversible hydration of carbon dioxide. This Bacillus subtilis (strain 168) protein is Putative carbonic anhydrase YtiB (ytiB).